Reading from the N-terminus, the 429-residue chain is Enolase (429 aa).

(2R)-2-phosphoglycerate is bound at residue glutamine 164. Catalysis depends on glutamate 206, which acts as the Proton donor. Residues aspartate 243, glutamate 286, and aspartate 313 each contribute to the Mg(2+) site. The (2R)-2-phosphoglycerate site is built by lysine 338, arginine 367, serine 368, and lysine 389. Lysine 338 acts as the Proton acceptor in catalysis.

Belongs to the enolase family. Mg(2+) serves as cofactor.

Its subcellular location is the cytoplasm. It is found in the secreted. The protein localises to the cell surface. The enzyme catalyses (2R)-2-phosphoglycerate = phosphoenolpyruvate + H2O. It participates in carbohydrate degradation; glycolysis; pyruvate from D-glyceraldehyde 3-phosphate: step 4/5. Its function is as follows. Catalyzes the reversible conversion of 2-phosphoglycerate (2-PG) into phosphoenolpyruvate (PEP). It is essential for the degradation of carbohydrates via glycolysis. This chain is Enolase, found in Thermosipho africanus (strain TCF52B).